Reading from the N-terminus, the 245-residue chain is Aliphatic sulfonates import ATP-binding protein SsuB 1 (245 aa).

The region spanning 9–227 is the ABC transporter domain; sequence LDLVGIGHRY…HRGDAQLAAW (219 aa). Residue 41 to 48 coordinates ATP; it reads GPSGVGKS.

This sequence belongs to the ABC transporter superfamily. Aliphatic sulfonates importer (TC 3.A.1.17.2) family. The complex is composed of two ATP-binding proteins (SsuB), two transmembrane proteins (SsuC) and a solute-binding protein (SsuA).

The protein localises to the cell membrane. It catalyses the reaction ATP + H2O + aliphatic sulfonate-[sulfonate-binding protein]Side 1 = ADP + phosphate + aliphatic sulfonateSide 2 + [sulfonate-binding protein]Side 1.. Functionally, part of the ABC transporter complex SsuABC involved in aliphatic sulfonates import. Responsible for energy coupling to the transport system. This chain is Aliphatic sulfonates import ATP-binding protein SsuB 1, found in Rhodococcus jostii (strain RHA1).